The primary structure comprises 478 residues: Glutamine synthetase (478 aa).

One can recognise a GS beta-grasp domain in the interval 16–100; the sequence is EKVEYVDVRF…INFFVHDPFT (85 aa). A GS catalytic domain is found at 108–478; that stretch reads PRNIARKAEN…PYEFALYYDV (371 aa). Positions 133 and 135 each coordinate Mg(2+). E214 lines the ATP pocket. Residues E219 and E227 each coordinate Mg(2+). 230–232 contributes to the ATP binding site; sequence YQF. L-glutamate contacts are provided by residues 271–272 and G272; that span reads NG. H276 contributes to the Mg(2+) binding site. Residues 278-280 and S280 contribute to the ATP site; that span reads HQS. Positions 329, 335, and 347 each coordinate L-glutamate. 3 residues coordinate ATP: R347, R352, and K361. Residue E366 participates in Mg(2+) binding. R368 contacts L-glutamate. Residue Y406 is modified to O-AMP-tyrosine.

This sequence belongs to the glutamine synthetase family. Oligomer of 12 subunits arranged in the form of two hexagons. Requires Mg(2+) as cofactor.

Its subcellular location is the cytoplasm. The catalysed reaction is L-glutamate + NH4(+) + ATP = L-glutamine + ADP + phosphate + H(+). When cellular nitrogen levels are high, the C-terminal adenylyl transferase (AT) of GlnE inhibits GlnA by covalent transfer of an adenylyl group from ATP to Tyr-406. Conversely, when nitrogen levels are low, the N-terminal adenylyl removase (AR) of GlnE activates GlnA by removing the adenylyl group by phosphorolysis. The fully adenylated enzyme complex is inactive. Involved in nitrogen metabolism via ammonium assimilation. Catalyzes the ATP-dependent biosynthesis of glutamine from glutamate and ammonia. Also plays a key role in controlling the ammonia levels within infected host cells and so contributes to the pathogens capacity to inhibit phagosome acidification and phagosome-lysosome fusion. Involved in cell wall biosynthesis via the production of the major component poly-L-glutamine (PLG). PLG synthesis in the cell wall occurs only in nitrogen limiting conditions and on the contrary high nitrogen conditions inhibit PLG synthesis. In Mycobacterium bovis (strain ATCC BAA-935 / AF2122/97), this protein is Glutamine synthetase.